Here is a 241-residue protein sequence, read N- to C-terminus: tRNA pseudouridine synthase A (241 aa).

The active-site Nucleophile is the Asp-51. Residue Tyr-110 coordinates substrate.

This sequence belongs to the tRNA pseudouridine synthase TruA family. In terms of assembly, homodimer.

It catalyses the reaction uridine(38/39/40) in tRNA = pseudouridine(38/39/40) in tRNA. Functionally, formation of pseudouridine at positions 38, 39 and 40 in the anticodon stem and loop of transfer RNAs. The chain is tRNA pseudouridine synthase A from Campylobacter jejuni subsp. jejuni serotype O:2 (strain ATCC 700819 / NCTC 11168).